We begin with the raw amino-acid sequence, 154 residues long: 17 kDa surface antigen (154 aa).

The first 19 residues, 1-19 (MKLLSKIMIIALAASMLQA), serve as a signal peptide directing secretion. The N-palmitoyl cysteine moiety is linked to residue C20. The S-diacylglycerol cysteine moiety is linked to residue C20.

The protein belongs to the rickettsiale 17 kDa surface antigen family.

It is found in the cell outer membrane. This is 17 kDa surface antigen (omp) from Rickettsia montanensis.